The primary structure comprises 603 residues: Aspartate--tRNA(Asp/Asn) ligase (603 aa).

Positions 205–208 (QLFK) are aspartate. Residue arginine 227 participates in L-aspartate binding. Residues 227 to 229 (RDE) and glutamine 236 each bind ATP. Histidine 463 provides a ligand contact to L-aspartate. ATP is bound at residue glutamate 497. Arginine 504 serves as a coordination point for L-aspartate. An ATP-binding site is contributed by 549 to 552 (GMDR).

This sequence belongs to the class-II aminoacyl-tRNA synthetase family. Type 1 subfamily. Homodimer.

It localises to the cytoplasm. It carries out the reaction tRNA(Asx) + L-aspartate + ATP = L-aspartyl-tRNA(Asx) + AMP + diphosphate. Its function is as follows. Aspartyl-tRNA synthetase with relaxed tRNA specificity since it is able to aspartylate not only its cognate tRNA(Asp) but also tRNA(Asn). Reaction proceeds in two steps: L-aspartate is first activated by ATP to form Asp-AMP and then transferred to the acceptor end of tRNA(Asp/Asn). This Anaeromyxobacter sp. (strain K) protein is Aspartate--tRNA(Asp/Asn) ligase.